The primary structure comprises 85 residues: Large ribosomal subunit protein bL27 (85 aa).

Residues Met-1 to Gly-22 are disordered.

The protein belongs to the bacterial ribosomal protein bL27 family.

The sequence is that of Large ribosomal subunit protein bL27 from Mycoplasmopsis pulmonis (strain UAB CTIP) (Mycoplasma pulmonis).